Reading from the N-terminus, the 255-residue chain is tRNA (guanine-N(1)-)-methyltransferase (255 aa).

Residues glycine 113 and 133 to 138 each bind S-adenosyl-L-methionine; that span reads IGDYVL.

This sequence belongs to the RNA methyltransferase TrmD family. Homodimer.

It is found in the cytoplasm. It carries out the reaction guanosine(37) in tRNA + S-adenosyl-L-methionine = N(1)-methylguanosine(37) in tRNA + S-adenosyl-L-homocysteine + H(+). Its function is as follows. Specifically methylates guanosine-37 in various tRNAs. The polypeptide is tRNA (guanine-N(1)-)-methyltransferase (Klebsiella pneumoniae (strain 342)).